The following is a 65-amino-acid chain: uncharacterized protein (65 aa).

The tract at residues 1–30 is disordered; the sequence is MPAASLESLLPPPPGKLPSPPLRPHGKFQR. The segment covering 10–23 has biased composition (pro residues); the sequence is LPPPPGKLPSPPLR.

This is an uncharacterized protein from Homo sapiens (Human).